We begin with the raw amino-acid sequence, 99 residues long: Single insulin-like growth factor-binding domain protein-2 (99 aa).

Residues 1–18 form the signal peptide; that stretch reads MESLFIFAFGMMLSSASA. An IGFBP N-terminal domain is found at 19–98; the sequence is LSCIPCVPEE…GQEVGRCRKK (80 aa). Ser-20 is a glycosylation site (O-linked (GalNAc...) serine). 6 disulfide bridges follow: Cys-21/Cys-44, Cys-24/Cys-46, Cys-29/Cys-47, Cys-35/Cys-50, Cys-58/Cys-74, and Cys-68/Cys-95.

As to expression, expressed in hemocytes.

It is found in the secreted. Its function is as follows. Has a role in the innate immune system. The sequence is that of Single insulin-like growth factor-binding domain protein-2 from Cupiennius salei (American wandering spider).